Reading from the N-terminus, the 368-residue chain is Large ribosomal subunit protein bL27m (368 aa).

A mitochondrion-targeting transit peptide spans 1-20; the sequence is MFSGLHTSKYACQVVVQIRT. Positions 23-44 are disordered; that stretch reads KRAAGSRTSMKDSAGRRLGPKK. Basic and acidic residues predominate over residues 31-44; the sequence is SMKDSAGRRLGPKK.

This sequence belongs to the bacterial ribosomal protein bL27 family.

The protein localises to the mitochondrion. Its function is as follows. Component of the large subunit of mitochondrial ribosome. The chain is Large ribosomal subunit protein bL27m (MRPL2) from Candida glabrata (strain ATCC 2001 / BCRC 20586 / JCM 3761 / NBRC 0622 / NRRL Y-65 / CBS 138) (Yeast).